A 545-amino-acid chain; its full sequence is 2-succinyl-5-enolpyruvyl-6-hydroxy-3-cyclohexene-1-carboxylate synthase (545 aa).

The segment at 184 to 209 (PLVPDPEPHGAPTPAGRPGGRPWTYT) is disordered. Low complexity predominate over residues 195-205 (PTPAGRPGGRP).

Belongs to the TPP enzyme family. MenD subfamily. As to quaternary structure, homodimer. Requires Mg(2+) as cofactor. Mn(2+) is required as a cofactor. Thiamine diphosphate serves as cofactor.

It catalyses the reaction isochorismate + 2-oxoglutarate + H(+) = 5-enolpyruvoyl-6-hydroxy-2-succinyl-cyclohex-3-ene-1-carboxylate + CO2. It functions in the pathway quinol/quinone metabolism; 1,4-dihydroxy-2-naphthoate biosynthesis; 1,4-dihydroxy-2-naphthoate from chorismate: step 2/7. It participates in quinol/quinone metabolism; menaquinone biosynthesis. Catalyzes the thiamine diphosphate-dependent decarboxylation of 2-oxoglutarate and the subsequent addition of the resulting succinic semialdehyde-thiamine pyrophosphate anion to isochorismate to yield 2-succinyl-5-enolpyruvyl-6-hydroxy-3-cyclohexene-1-carboxylate (SEPHCHC). This chain is 2-succinyl-5-enolpyruvyl-6-hydroxy-3-cyclohexene-1-carboxylate synthase, found in Mycobacterium avium (strain 104).